Consider the following 163-residue polypeptide: Photosystem II extrinsic protein V (163 aa).

A signal peptide spans 1–26 (MLKRSSWLAALLGLLTVVSTSTHTYA). Residues Cys-63, Cys-66, His-67, and His-118 each contribute to the heme c site.

The protein belongs to the cytochrome c family. PsbV subfamily. As to quaternary structure, PSII is composed of 1 copy each of membrane proteins PsbA, PsbB, PsbC, PsbD, PsbE, PsbF, PsbH, PsbI, PsbJ, PsbK, PsbL, PsbM, PsbT, PsbY, PsbZ, Psb30/Ycf12, at least 3 peripheral proteins of the oxygen-evolving complex and a large number of cofactors. It forms dimeric complexes. The extrinsic subunits in red algae are PsbO (OEC33), PsbQ', cytochrome c-550 and PsbU. Heme c is required as a cofactor.

The protein resides in the plastid. Its subcellular location is the chloroplast thylakoid membrane. In terms of biological role, one of the extrinsic, lumenal subunits of photosystem II (PSII). PSII is a light-driven water plastoquinone oxidoreductase, using light energy to abstract electrons from H(2)O, generating a proton gradient subsequently used for ATP formation. The extrinsic proteins stabilize the structure of photosystem II oxygen-evolving complex (OEC), the ion environment of oxygen evolution and protect the OEC against heat-induced inactivation. The protein is Photosystem II extrinsic protein V of Pyropia yezoensis (Susabi-nori).